Consider the following 761-residue polypeptide: Dipeptidyl-peptidase 4 (761 aa).

An N-terminal signal peptide occupies residues 1–15; the sequence is MTLSAWIILVTLAMA. Residues Ser-622, Asp-706, and His-738 each act as charge relay system in the active site.

It belongs to the peptidase S9C family.

Its subcellular location is the membrane. Functionally, may be involved in metabolism of dipeptides or may affect host defense mechanisms. In Giardia intestinalis (Giardia lamblia), this protein is Dipeptidyl-peptidase 4 (DPP).